Here is a 271-residue protein sequence, read N- to C-terminus: PA-phosphatase related-family protein DDB_G0284367 (271 aa).

Helical transmembrane passes span 23-43 (FLCL…IPPF), 68-88 (IVPV…VFIG), 102-122 (AALG…ILKV), 150-170 (FPSG…FYLC), 181-201 (GNIL…LVAV), and 211-231 (FSDI…VYFM).

It belongs to the PA-phosphatase related phosphoesterase family.

Its subcellular location is the membrane. This chain is PA-phosphatase related-family protein DDB_G0284367, found in Dictyostelium discoideum (Social amoeba).